The primary structure comprises 268 residues: MAERTLVGLALKVGPLGEHDRLLSLLSDAEGVTRLAVPGARRPKSSLAAAAPLTLLELQVGGRSGLARVRQLRVLHSHAGLGRQLETLSAAQAFCDLCLQIGREDPVEGLLATLQLHLERLDQRSDCLDELLASSVQGAIHLLTLGGYSLPLQSCCLSGAPLEPPIGTWEWRCSLLPMDGFAIDRQPGAAMTLNPSELALLQRLTRADLPRRRDGELMGPRPVWLRLLAVVEIWIRTHLQRGNPALAMLRECVTAKQVSQHGADAANS.

The protein belongs to the RecO family.

In terms of biological role, involved in DNA repair and RecF pathway recombination. The sequence is that of DNA repair protein RecO from Parasynechococcus marenigrum (strain WH8102).